We begin with the raw amino-acid sequence, 357 residues long: G-protein coupled receptor 183 (357 aa).

Residues 1–32 (MANNFTTPLAASHGNNCDLYAHHSTARILMPL) lie on the Extracellular side of the membrane. An N-linked (GlcNAc...) asparagine glycan is attached at Asn4. Residues 33–53 (HYSLVFIIGLVGNLLALVVIV) traverse the membrane as a helical segment. Residues 54–68 (QNRKKINSTTLYSMN) are Cytoplasmic-facing. Residues 69–89 (LVISDILFTTALPTRIVYYAL) traverse the membrane as a helical segment. A 7alpha,25-dihydroxycholesterol-binding site is contributed by Arg83. Residues 90–101 (GFDWRIGDALCR) are Extracellular-facing. Cys100 and Cys177 form a disulfide bridge. The helical transmembrane segment at 102–122 (ITALLFYINTYAGVNFMTCLS) threads the bilayer. Tyr108 and Tyr112 together coordinate 7alpha,25-dihydroxycholesterol. The tract at residues 122–130 (SIDRFFAVV) is interaction with G proteins. Over 123–143 (IDRFFAVVHPLRYNKIKRIEY) the chain is Cytoplasmic. A helical transmembrane segment spans residues 144 to 164 (AKGICVFVWILVFAQTLPLLL). Residues 165-190 (KPMSKQEADKTTCMEYPNFEGTASLP) are Extracellular-facing. The chain crosses the membrane as a helical span at residues 191 to 211 (WILLGACLLGYVLPLAIILLC). Residues 212–240 (YSQICCKLFRTAKQNPLTEKSGVNKKALN) lie on the Cytoplasmic side of the membrane. The chain crosses the membrane as a helical span at residues 241–261 (TIILIIGVFVLCFTPYHVAIM). Tyr256 serves as a coordination point for 7alpha,25-dihydroxycholesterol. The Extracellular portion of the chain corresponds to 262–287 (QHMVKTLYAPGALGCGVRHSFQISLH). A helical membrane pass occupies residues 288–308 (FTVCLMNFNCCMDPFIYFFAC). Over 309–357 (KGYKRKVMKMLKRQVSVSISSAVRSAPEENSREMTESQMMIHSKASNGR) the chain is Cytoplasmic. Phosphoserine occurs at positions 324 and 345. A disordered region spans residues 336 to 357 (EENSREMTESQMMIHSKASNGR). The segment covering 344–357 (ESQMMIHSKASNGR) has biased composition (polar residues).

Belongs to the G-protein coupled receptor 1 family. Homodimer and heterodimer. Heterodimerizes with CXCR5; leading to modulate the interaction between of CXCL13 and CXCR5.

The protein localises to the cell membrane. In terms of biological role, G-protein coupled receptor expressed in lymphocytes that acts as a chemotactic receptor for B-cells, T-cells, splenic dendritic cells, monocytes/macrophages and astrocytes. Receptor for oxysterol 7-alpha,25-dihydroxycholesterol (7-alpha,25-OHC) and other related oxysterols. Mediates cell positioning and movement of a number of cells by binding the 7-alpha,25-OHC ligand that forms a chemotactic gradient. Binding of 7-alpha,25-OHC mediates the correct localization of B-cells during humoral immune responses. Guides B-cell movement along the B-cell zone-T-cell zone boundary and later to interfollicular and outer follicular regions. Its specific expression during B-cell maturation helps position B-cells appropriately for mounting T-dependent antibody responses. Collaborates with CXCR5 to mediate B-cell migration; probably by forming a heterodimer with CXCR5 that affects the interaction between of CXCL13 and CXCR5. Also acts as a chemotactic receptor for some T-cells upon binding to 7-alpha,25-OHC ligand. Promotes follicular helper T (Tfh) cells differentiation by positioning activated T-cells at the follicle-T-zone interface, promoting contact of newly activated CD4 T-cells with activated dendritic cells and exposing them to Tfh-cell-promoting inducible costimulator (ICOS) ligand. Expression in splenic dendritic cells is required for their homeostasis, localization and ability to induce B- and T-cell responses: GPR183 acts as a chemotactic receptor in dendritic cells that mediates the accumulation of CD4(+) dendritic cells in bridging channels. Regulates migration of astrocytes and is involved in communication between astrocytes and macrophages. Promotes osteoclast precursor migration to bone surfaces. Signals constitutively through G(i)-alpha, but not G(s)-alpha or G(q)-alpha. Signals constitutively also via MAPK1/3 (ERK1/2). The protein is G-protein coupled receptor 183 (Gpr183) of Rattus norvegicus (Rat).